Reading from the N-terminus, the 222-residue chain is Arginine ABC transporter permease protein ArtM (222 aa).

The Periplasmic portion of the chain corresponds to 1 to 15; it reads MFEYLPELMKGLHTS. The 197-residue stretch at 12–208 folds into the ABC transmembrane type-1 domain; it reads LHTSLTLTVA…VVNGLLTLMM (197 aa). The helical transmembrane segment at 16 to 36 threads the bilayer; it reads LTLTVASLIVALILALIFTII. Residues 37–49 are Cytoplasmic-facing; sequence LTLKTPVLVWLVR. Residues 50-70 traverse the membrane as a helical segment; that stretch reads GYITLFTGTPLLVQIFLIYYG. Over 71–79 the chain is Periplasmic; it reads PGQFPTLQE. Residues 80 to 100 traverse the membrane as a helical segment; the sequence is YPALWHLLSEPWLCALIALSL. Over 101-154 the chain is Cytoplasmic; sequence NSAAYTTQLFYGAIRAIPEGQWQSCSALGMSKKDTLAILLPYAFKRSLSSYSNE. A helical transmembrane segment spans residues 155 to 175; the sequence is VVLVFKSTSLAYTITLMEVMG. The Periplasmic segment spans residues 176-186; sequence YSQLLYGRTYD. A helical transmembrane segment spans residues 187 to 207; it reads VMVFGAAGIIYLVVNGLLTLM. At 208–222 the chain is on the cytoplasmic side; the sequence is MRLIERKALAFERRN.

The protein belongs to the binding-protein-dependent transport system permease family. HisMQ subfamily. The complex is composed of two ATP-binding proteins (ArtP), two transmembrane proteins (ArtM and ArtQ) and two solute-binding proteins (ArtJ and ArtI).

It is found in the cell inner membrane. In terms of biological role, part of the ABC transporter complex ArtPIQMJ involved in arginine transport. Probably responsible for the translocation of the substrate across the membrane. In Escherichia coli (strain K12), this protein is Arginine ABC transporter permease protein ArtM (artM).